We begin with the raw amino-acid sequence, 553 residues long: Putative transport protein YidE (553 aa).

Helical transmembrane passes span 4–24 (IALT…IGNV), 28–48 (GIGL…HFVS), 65–85 (FGLI…FFAS), 95–115 (LFAV…HKLF), and 158–178 (MSYA…MWML). RCK C-terminal domains follow at residues 191–276 (QQHE…VIGQ) and 279–361 (DTSL…VLGN). 6 helical membrane passes run 371-391 (MLPV…PVFV), 393-413 (GFPA…ALIL), 439-459 (IVLF…NTLV), 464-484 (LSWI…VGIL), 493-513 (YLTM…LAFA), and 533-553 (LVMF…WSIG).

This sequence belongs to the AAE transporter (TC 2.A.81) family. YidE subfamily.

The protein localises to the cell membrane. This chain is Putative transport protein YidE, found in Shigella boydii serotype 18 (strain CDC 3083-94 / BS512).